Reading from the N-terminus, the 338-residue chain is GTPase Obg (338 aa).

Residues 1 to 159 (MQFIDEVKIH…RWLRLELKLM (159 aa)) form the Obg domain. The segment at 66–91 (KAGRGKNGMGKDRHGANGDDLTIPVP) is disordered. One can recognise an OBG-type G domain in the interval 160–331 (ADVGLLGFPN…LLDEIARHLW (172 aa)). GTP is bound by residues 166–173 (GFPNVGKS), 191–195 (FTTIK), 213–216 (DIPG), 283–286 (NKID), and 312–314 (SAA). Mg(2+)-binding residues include Ser-173 and Thr-193.

Belongs to the TRAFAC class OBG-HflX-like GTPase superfamily. OBG GTPase family. As to quaternary structure, monomer. It depends on Mg(2+) as a cofactor.

The protein localises to the cytoplasm. Functionally, an essential GTPase which binds GTP, GDP and possibly (p)ppGpp with moderate affinity, with high nucleotide exchange rates and a fairly low GTP hydrolysis rate. Plays a role in control of the cell cycle, stress response, ribosome biogenesis and in those bacteria that undergo differentiation, in morphogenesis control. The chain is GTPase Obg from Geobacter metallireducens (strain ATCC 53774 / DSM 7210 / GS-15).